The following is a 960-amino-acid chain: Vacuolar membrane protease (960 aa).

Residues 1–57 (MADNNSSSGSLVIDEQDYDVHEAGQQGQQGQQKHQQRQQERPSLITRVFRSVFGYRK) are Cytoplasmic-facing. Residues 22-41 (EAGQQGQQGQQKHQQRQQER) form a disordered region. Residues 24–33 (GQQGQQGQQK) are compositionally biased toward low complexity. The helical transmembrane segment at 58-78 (TSLSLFVVATIALCVSLSYID) threads the bilayer. Residues 79–401 (NSVDFISFPT…FTISTSQLFK (323 aa)) lie on the Vacuolar side of the membrane. The N-linked (GlcNAc...) asparagine glycan is linked to N148. H189 and D201 together coordinate Zn(2+). The active-site Proton acceptor is the E235. Zn(2+) is bound by residues E236, E261, and H333. The helical transmembrane segment at 402–422 (INVALLTVFPILNGLLLLYTI) threads the bilayer. The Cytoplasmic segment spans residues 423 to 432 (RSRKWQVSFS). A helical membrane pass occupies residues 433 to 453 (SAISIPVALLVTMFIVVYLVV). At 454 to 476 (ESYKSFNQYLPSSRPLLLVATIT) the chain is on the vacuolar side. Residues 477–497 (SILLLVFSIILVAFSFFSIIA) traverse the membrane as a helical segment. Residues 498 to 502 (EENLR) lie on the Cytoplasmic side of the membrane. The chain crosses the membrane as a helical span at residues 503 to 523 (LLAIVELSFAYWVGLAFTTHG). The Vacuolar portion of the chain corresponds to 524–535 (LSGAESARHSGE). The helical transmembrane segment at 536–556 (FAVSILFTLEAVASFLGLIGW) threads the bilayer. At 557–635 (SLCRNRSHLQ…FGYDWSLQYL (79 aa)) the chain is on the cytoplasmic side. The span at 587–605 (NDHDHEHRHGHEDNEHGEA) shows a compositional bias: basic and acidic residues. The disordered stretch occupies residues 587-614 (NDHDHEHRHGHEDNEHGEAHVQQQSQSR). Residues 636–656 (ITVPLSIFIIYNSGWLVLEGV) form a helical membrane-spanning segment. N-linked (GlcNAc...) asparagine glycosylation is present at N657. The Vacuolar portion of the chain corresponds to 657 to 668 (NKTLQESAKAET). A helical transmembrane segment spans residues 669–689 (FVYNLLWIVSVSLVLPLIPFA). The Cytoplasmic segment spans residues 690–696 (GKLNRYM). Residues 697–717 (VFVLIAIGVLGTLLVHVVQPF) form a helical membrane-spanning segment. At 718 to 960 (NEANPLKLRF…LVAYTKQVHV (243 aa)) the chain is on the vacuolar side. 5 N-linked (GlcNAc...) asparagine glycosylation sites follow: N736, N763, N803, N875, and N921.

It belongs to the peptidase M28 family. Zn(2+) is required as a cofactor.

The protein resides in the vacuole membrane. May be involved in vacuolar sorting and osmoregulation. In Lodderomyces elongisporus (strain ATCC 11503 / CBS 2605 / JCM 1781 / NBRC 1676 / NRRL YB-4239) (Yeast), this protein is Vacuolar membrane protease.